We begin with the raw amino-acid sequence, 144 residues long: Large ribosomal subunit protein uL22 (144 aa).

Positions 124–137 (RLKKRVLGQNKRKQ) are enriched in basic residues. The interval 124–144 (RLKKRVLGQNKRKQSVSGEKK) is disordered.

It belongs to the universal ribosomal protein uL22 family. In terms of assembly, part of the 50S ribosomal subunit.

Its function is as follows. This protein binds specifically to 23S rRNA; its binding is stimulated by other ribosomal proteins, e.g. L4, L17, and L20. It is important during the early stages of 50S assembly. It makes multiple contacts with different domains of the 23S rRNA in the assembled 50S subunit and ribosome. Functionally, the globular domain of the protein is located near the polypeptide exit tunnel on the outside of the subunit, while an extended beta-hairpin is found that lines the wall of the exit tunnel in the center of the 70S ribosome. In Mycoplasmoides gallisepticum (strain R(low / passage 15 / clone 2)) (Mycoplasma gallisepticum), this protein is Large ribosomal subunit protein uL22.